The following is a 173-amino-acid chain: Mesencephalic astrocyte-derived neurotrophic factor homolog (173 aa).

A signal peptide spans M1 to A22. Cystine bridges form between C28–C114, C31–C103, C61–C72, and C148–C151.

This sequence belongs to the ARMET family.

The protein localises to the secreted. Its function is as follows. Required during the maturation of the embryonic nervous system for maintenance of neuronal and cuticular connectivity. Essential for maintenance of dopaminergic neurons and dopamine levels. This is Mesencephalic astrocyte-derived neurotrophic factor homolog from Drosophila ananassae (Fruit fly).